A 3093-amino-acid chain; its full sequence is Intermembrane lipid transfer protein VPS13A (3093 aa).

Residues 3–116 (FESVVVDVLN…LMEAKQQELK (114 aa)) form the Chorein N-terminal domain. A TPR 1 repeat occupies 373–406 (LTSKKPPGELLVSLEELEKTLDVLNITIARQQAE). Position 839 is a phosphoserine (Ser839). An FFAT motif is present at residues 842 to 848 (EFFDAPC). The residue at position 1416 (Ser1416) is a Phosphoserine. One can recognise an SHR-BD domain in the interval 2209 to 2454 (VAFHSPYWMV…VFYTWADPVG (246 aa)). The stretch at 2860–2898 (ILGLDVLGNPFGLIREFSEGVEAFFYEPYQGAIQGPEEF) is one TPR 2 repeat. Residues 2953–3027 (PAGFREGITR…SSTFQGIKRA (75 aa)) are required for lipid droplet localization.

It belongs to the VPS13 family. In terms of assembly, interacts (via FFAT motif) with VAPA and VAPB. Interacts with RAB7A. Interacts with XK.

It localises to the mitochondrion outer membrane. Its subcellular location is the endoplasmic reticulum membrane. The protein localises to the endosome membrane. The protein resides in the lysosome membrane. It is found in the lipid droplet. It localises to the golgi apparatus. Its subcellular location is the cytoplasmic vesicle. The protein localises to the secretory vesicle. The protein resides in the neuronal dense core vesicle. Its function is as follows. Mediates the transfer of lipids between membranes at organelle contact sites. Required for the formation or stabilization of ER-mitochondria contact sites which enable transfer of lipids between the ER and mitochondria. Negatively regulates lipid droplet size and motility. Required for efficient lysosomal protein degradation. In Macaca fascicularis (Crab-eating macaque), this protein is Intermembrane lipid transfer protein VPS13A (VPS13A).